A 378-amino-acid chain; its full sequence is Glutamate 5-kinase (378 aa).

K17 provides a ligand contact to ATP. Substrate-binding residues include S58, D145, and N157. ATP-binding positions include 177 to 178 and 221 to 227; these read TD and TGGMMTK. Residues 286–364 form the PUA domain; it reads VGKLYLDSGA…KEIPTILGYV (79 aa).

Belongs to the glutamate 5-kinase family.

It localises to the cytoplasm. The catalysed reaction is L-glutamate + ATP = L-glutamyl 5-phosphate + ADP. The protein operates within amino-acid biosynthesis; L-proline biosynthesis; L-glutamate 5-semialdehyde from L-glutamate: step 1/2. Catalyzes the transfer of a phosphate group to glutamate to form L-glutamate 5-phosphate. In Nostoc sp. (strain PCC 7120 / SAG 25.82 / UTEX 2576), this protein is Glutamate 5-kinase.